Reading from the N-terminus, the 310-residue chain is Protein N-terminal asparagine amidohydrolase (310 aa).

As to quaternary structure, monomer.

It is found in the cytoplasm. It catalyses the reaction N-terminal L-asparaginyl-[protein] + H2O + H(+) = N-terminal L-aspartyl-[protein] + NH4(+). Inhibited by micromolar concentrations of copper and zinc ions. N-terminal asparagine deamidase that mediates deamidation of N-terminal asparagine residues to aspartate. Required for the ubiquitin-dependent turnover of intracellular proteins that initiate with Met-Asn. These proteins are acetylated on the retained initiator methionine and can subsequently be modified by the removal of N-acetyl methionine by acylaminoacid hydrolase (AAH). Conversion of the resulting N-terminal asparagine to aspartate by NTAN1/PNAD renders the protein susceptible to arginylation, polyubiquitination and degradation as specified by the N-end rule. This enzyme does not act on substrates with internal or C-terminal asparagines and does not act on glutamine residues in any position, nor on acetylated N-terminal peptidyl Asn. The chain is Protein N-terminal asparagine amidohydrolase (NTAN1) from Homo sapiens (Human).